The primary structure comprises 61 residues: Metallothionein-2E (61 aa).

M1 bears the N-acetylmethionine mark. Residues M1–C29 are beta. Residues C5, C7, C13, C15, C19, C21, C24, C26, C29, C33, C34, C36, C37, C41, C44, C48, C50, C57, C59, and C60 each contribute to the a divalent metal cation site. The alpha stretch occupies residues K30–A61.

It belongs to the metallothionein superfamily. Type 1 family. As to quaternary structure, monomer.

Metallothioneins have a high content of cysteine residues that bind various heavy metals; these proteins are transcriptionally regulated by both heavy metals and glucocorticoids. This chain is Metallothionein-2E, found in Oryctolagus cuniculus (Rabbit).